A 199-amino-acid polypeptide reads, in one-letter code: MGEAAKDQTEEVIQAWYLDNKEEDQKLPHHKDPKEFVSLDKLAELGVLCWRLDADNYETDEELKRIRESRGYSYMDLCEVCPEKLPNYEEKVKMFFEEHLHIDEEIRYCLAGSGYFDVRDLNDIWIRVWVKKGGLIVFPAGIYHRFTVDSDNYMKAMRLFVGGPVWTAYNRPHDHLPARKAYMKKFLKVIGDRNIDASA.

The Fe(2+) site is built by His-99, His-101, Glu-105, and His-144. Ni(2+) contacts are provided by His-99, His-101, Glu-105, and His-144.

This sequence belongs to the acireductone dioxygenase (ARD) family. It depends on Fe(2+) as a cofactor. The cofactor is Ni(2+).

It localises to the cytoplasm. It is found in the nucleus. The enzyme catalyses 1,2-dihydroxy-5-(methylsulfanyl)pent-1-en-3-one + O2 = 4-methylsulfanyl-2-oxobutanoate + formate + 2 H(+). It carries out the reaction 1,2-dihydroxy-5-(methylsulfanyl)pent-1-en-3-one + O2 = 3-(methylsulfanyl)propanoate + CO + formate + 2 H(+). It participates in amino-acid biosynthesis; L-methionine biosynthesis via salvage pathway; L-methionine from S-methyl-5-thio-alpha-D-ribose 1-phosphate: step 5/6. Functionally, catalyzes 2 different reactions between oxygen and the acireductone 1,2-dihydroxy-3-keto-5-methylthiopentene (DHK-MTPene) depending upon the metal bound in the active site. Fe-containing acireductone dioxygenase (Fe-ARD) produces formate and 2-keto-4-methylthiobutyrate (KMTB), the alpha-ketoacid precursor of methionine in the methionine recycle pathway. Ni-containing acireductone dioxygenase (Ni-ARD) produces methylthiopropionate, carbon monoxide and formate, and does not lie on the methionine recycle pathway. The polypeptide is Acireductone dioxygenase 1 (ARD1) (Arabidopsis thaliana (Mouse-ear cress)).